The sequence spans 658 residues: ATP-dependent RNA helicase DDX3Y (658 aa).

Positions 1 to 143 (MSQVAAESTA…DWSKPLPPSE (143 aa)) are disordered. S2 is modified (N-acetylserine). Basic and acidic residues predominate over residues 45 to 69 (RNRETSKGVCDKDSSGWSCSKDKDA). K56 carries the post-translational modification N6-acetyllysine. Residues S86 and S90 each carry the phosphoserine modification. The segment covering 94–129 (GRFDDHGRNDYDGIGGRDRTGFGKFERSGHSRWSDR) has biased composition (basic and acidic residues). R101 carries the omega-N-methylarginine modification. Position 104 is a phosphotyrosine (Y104). Omega-N-methylarginine is present on R110. K117 bears the N6-acetyllysine mark. Phosphoserine is present on residues S130 and S182. The short motif at 179 to 207 (ENFSDIEMGEIIMGNIELTRYTRPTPVQK) is the Q motif element. ATP is bound at residue 199-206 (YTRPTPVQ). Residues 210-402 (IPIIKEKRDL…RDFLDEYIFL (193 aa)) form the Helicase ATP-binding domain. A Glycyl lysine isopeptide (Lys-Gly) (interchain with G-Cter in SUMO2) cross-link involves residue K214. 223-230 (AQTGSGKT) contributes to the ATP binding site. Residues 346–349 (DEAD) carry the DEAD box motif. Residues 413-574 (NITQKVVWVE…EVPSWLESMA (162 aa)) enclose the Helicase C-terminal domain. A Phosphoserine modification is found at S455. Omega-N-methylarginine is present on R590. 2 positions are modified to phosphoserine: S592 and S603. Residues 597–627 (ARDYRQSSGSANAGFNSNRANSSRSSGSSHN) are disordered. Low complexity predominate over residues 603-627 (SSGSANAGFNSNRANSSRSSGSSHN). Omega-N-methylarginine is present on residues R615 and R628.

Belongs to the DEAD box helicase family. DDX3/DED1 subfamily. As to expression, found in heart, brain, liver, skeletal muscle, kidney and testis. Low expression detected in lung. In testis, expressed in all types of spermatogenic cells including spermatogonia, spermatocytes, spermatids and somatic Sertoli cells within the seminiferous tubules. Also expressed in Leydig cells and other interstitial cells.

It localises to the cytoplasm. It is found in the nucleus. It carries out the reaction ATP + H2O = ADP + phosphate + H(+). Probable ATP-dependent RNA helicase. During immune response, may enhance IFNB1 expression via IRF3/IRF7 pathway. This Mus musculus (Mouse) protein is ATP-dependent RNA helicase DDX3Y (Ddx3y).